We begin with the raw amino-acid sequence, 187 residues long: UPF0340 protein stu1894 (187 aa).

The protein belongs to the UPF0340 family.

This is UPF0340 protein stu1894 from Streptococcus thermophilus (strain ATCC BAA-250 / LMG 18311).